Here is a 233-residue protein sequence, read N- to C-terminus: NAD-dependent protein deacylase (233 aa).

Residues 1–230 (MKNIMILSGA…ALDIENFMKD (230 aa)) enclose the Deacetylase sirtuin-type domain. NAD(+) is bound at residue 9 to 28 (GAGLSAPSGLKTFRDNDGLW). Substrate is bound by residues Tyr53 and Arg56. 88 to 91 (QNVD) contributes to the NAD(+) binding site. The active-site Proton acceptor is His106. Zn(2+) contacts are provided by Cys114, Cys117, Cys133, and Cys136. NAD(+)-binding positions include 172 to 174 (GTS) and Ile213.

It belongs to the sirtuin family. Class III subfamily. Zn(2+) serves as cofactor.

The protein localises to the cytoplasm. It carries out the reaction N(6)-acetyl-L-lysyl-[protein] + NAD(+) + H2O = 2''-O-acetyl-ADP-D-ribose + nicotinamide + L-lysyl-[protein]. The catalysed reaction is N(6)-succinyl-L-lysyl-[protein] + NAD(+) + H2O = 2''-O-succinyl-ADP-D-ribose + nicotinamide + L-lysyl-[protein]. Its function is as follows. NAD-dependent lysine deacetylase and desuccinylase that specifically removes acetyl and succinyl groups on target proteins. Modulates the activities of several proteins which are inactive in their acylated form. The sequence is that of NAD-dependent protein deacylase from Campylobacter jejuni (strain RM1221).